A 127-amino-acid chain; its full sequence is Protein ApaG (127 aa).

An ApaG domain is found at 3–127; it reads DDPRYRVEVE…FVLSVPRTLH (125 aa).

In Xanthomonas campestris pv. campestris (strain 8004), this protein is Protein ApaG.